The following is a 293-amino-acid chain: 4-hydroxy-tetrahydrodipicolinate synthase (293 aa).

Residue Thr-45 participates in pyruvate binding. Tyr-133 functions as the Proton donor/acceptor in the catalytic mechanism. Residue Lys-161 is the Schiff-base intermediate with substrate of the active site. Residue Ile-203 coordinates pyruvate.

Belongs to the DapA family. As to quaternary structure, homotetramer; dimer of dimers.

The protein localises to the cytoplasm. It catalyses the reaction L-aspartate 4-semialdehyde + pyruvate = (2S,4S)-4-hydroxy-2,3,4,5-tetrahydrodipicolinate + H2O + H(+). It participates in amino-acid biosynthesis; L-lysine biosynthesis via DAP pathway; (S)-tetrahydrodipicolinate from L-aspartate: step 3/4. In terms of biological role, catalyzes the condensation of (S)-aspartate-beta-semialdehyde [(S)-ASA] and pyruvate to 4-hydroxy-tetrahydrodipicolinate (HTPA). This chain is 4-hydroxy-tetrahydrodipicolinate synthase, found in Pseudoalteromonas atlantica (strain T6c / ATCC BAA-1087).